Consider the following 505-residue polypeptide: Maturase K (505 aa).

Belongs to the intron maturase 2 family. MatK subfamily.

It is found in the plastid. The protein localises to the chloroplast. Usually encoded in the trnK tRNA gene intron. Probably assists in splicing its own and other chloroplast group II introns. In Gomphrena pulchella (Globe amaranth), this protein is Maturase K.